Reading from the N-terminus, the 97-residue chain is Single insulin-like growth factor-binding domain protein-1 (97 aa).

The N-terminal stretch at 1–19 is a signal peptide; it reads MKTLFVFAVGIMLSMRASA. One can recognise an IGFBP N-terminal domain in the interval 20–96; the sequence is FTCPECRPEL…PEIVGTCVKI (77 aa). The O-linked (GalNAc...) threonine glycan is linked to threonine 21. 6 disulfide bridges follow: cysteine 22–cysteine 45, cysteine 25–cysteine 47, cysteine 30–cysteine 48, cysteine 36–cysteine 51, cysteine 59–cysteine 75, and cysteine 69–cysteine 93.

Expressed in hemocytes.

The protein resides in the secreted. Has a role in the innate immune system. In Cupiennius salei (American wandering spider), this protein is Single insulin-like growth factor-binding domain protein-1.